The primary structure comprises 327 residues: Phenylalanine--tRNA ligase alpha subunit (327 aa).

Position 252 (Glu252) interacts with Mg(2+).

This sequence belongs to the class-II aminoacyl-tRNA synthetase family. Phe-tRNA synthetase alpha subunit type 1 subfamily. As to quaternary structure, tetramer of two alpha and two beta subunits. Mg(2+) is required as a cofactor.

It is found in the cytoplasm. It carries out the reaction tRNA(Phe) + L-phenylalanine + ATP = L-phenylalanyl-tRNA(Phe) + AMP + diphosphate + H(+). This is Phenylalanine--tRNA ligase alpha subunit from Edwardsiella ictaluri (strain 93-146).